A 237-amino-acid chain; its full sequence is Uracil-DNA glycosylase (237 aa).

D77 acts as the Proton acceptor in catalysis.

This sequence belongs to the uracil-DNA glycosylase (UDG) superfamily. UNG family.

It is found in the cytoplasm. It catalyses the reaction Hydrolyzes single-stranded DNA or mismatched double-stranded DNA and polynucleotides, releasing free uracil.. In terms of biological role, excises uracil residues from the DNA which can arise as a result of misincorporation of dUMP residues by DNA polymerase or due to deamination of cytosine. This is Uracil-DNA glycosylase from Acinetobacter baumannii (strain AB307-0294).